A 213-amino-acid chain; its full sequence is Peptidoglycan-N-acetylglucosamine deacetylase BC_3618 (213 aa).

Residues 22-203 form the NodB homology domain; the sequence is KIIAITFDDG…ELKKQGYRFV (182 aa). Residue Asp29 is the Proton acceptor of the active site. Zn(2+) contacts are provided by Asp30, His80, and His84. His175 functions as the Proton donor in the catalytic mechanism.

This sequence belongs to the polysaccharide deacetylase family. The cofactor is Zn(2+).

It carries out the reaction peptidoglycan-N-acetyl-D-glucosamine + H2O = peptidoglycan-D-glucosamine + acetate.. With respect to regulation, inhibited by CuCl(2) and ZnCl(2). Its function is as follows. Catalyzes the deacetylation of N-acetylglucosamine (GlcNAc) residues in peptidoglycan. Also acts on soluble chitin substrates and N-acetylchitooligomers. Acts on cell wall peptidoglycan from the Gram-positive bacteria B.cereus and B.subtilis and the Gram-negative bacterium H.pylori. Not active on acetylated xylan. The chain is Peptidoglycan-N-acetylglucosamine deacetylase BC_3618 from Bacillus cereus (strain ATCC 14579 / DSM 31 / CCUG 7414 / JCM 2152 / NBRC 15305 / NCIMB 9373 / NCTC 2599 / NRRL B-3711).